The sequence spans 121 residues: Flagellar protein FliT (121 aa).

The tract at residues 1–50 (MNNAPHLYFAWQQLVEKSQLMLRLATEEQWDELIASEMAYVNAVQEIAHL) is required for homodimerization. Positions 60-98 (MQEQLRPMLHLILDNESKVKQLLQIRMDELAKLVGQSSV) are fliD binding.

Belongs to the FliT family. In terms of assembly, homodimer. Interacts with FliD and FlhC.

The protein resides in the cytoplasm. It localises to the cytosol. In terms of biological role, dual-function protein that regulates the transcription of class 2 flagellar operons and that also acts as an export chaperone for the filament-capping protein FliD. As a transcriptional regulator, acts as an anti-FlhDC factor; it directly binds FlhC, thus inhibiting the binding of the FlhC/FlhD complex to class 2 promoters, resulting in decreased expression of class 2 flagellar operons. As a chaperone, effects FliD transition to the membrane by preventing its premature polymerization, and by directing it to the export apparatus. The polypeptide is Flagellar protein FliT (Shigella flexneri serotype 5b (strain 8401)).